An 880-amino-acid polypeptide reads, in one-letter code: Beta-glucosidase 2 (880 aa).

Residues 1-17 (MLLILELLVLIIGLGVA) form the signal peptide. Residues Asn-24, Asn-77, and Asn-271 are each glycosylated (N-linked (GlcNAc...) asparagine). Asp-299 is a catalytic residue. 8 N-linked (GlcNAc...) asparagine glycosylation sites follow: Asn-336, Asn-343, Asn-376, Asn-548, Asn-589, Asn-712, Asn-743, and Asn-794.

Belongs to the glycosyl hydrolase 3 family.

The catalysed reaction is Hydrolysis of terminal, non-reducing beta-D-glucosyl residues with release of beta-D-glucose.. The protein operates within glycan metabolism; cellulose degradation. This is Beta-glucosidase 2 (BGL2) from Saccharomycopsis fibuligera (Yeast).